The sequence spans 356 residues: Fructose-1,6-bisphosphatase class 1 (356 aa).

4 residues coordinate Mg(2+): Glu-91, Asp-113, Leu-115, and Asp-116. Substrate is bound by residues Asp-116–Ser-119 and Asn-208. Mg(2+) is bound at residue Glu-280.

The protein belongs to the FBPase class 1 family. In terms of assembly, homotetramer. Mg(2+) is required as a cofactor.

It localises to the cytoplasm. The catalysed reaction is beta-D-fructose 1,6-bisphosphate + H2O = beta-D-fructose 6-phosphate + phosphate. The protein operates within carbohydrate biosynthesis; gluconeogenesis. This Methylacidiphilum infernorum (isolate V4) (Methylokorus infernorum (strain V4)) protein is Fructose-1,6-bisphosphatase class 1.